The primary structure comprises 447 residues: MALLSLNNHQSHQRLTVNPPAQGVALTGRLRVPGDKSISHRALMLGAIATGETIIEGLLLGEDPRSTAHCFRAMGAEISELNSEKIIVQGRGLGQLQEPSTVLDAGNSGTTMRLMLGLLAGQKDCLFTVTGDDSLRHRPMSRVIQPLQQMGAKIWARSNGKFAPLAVQGSQLKPIHYHSPIASAQVKSCLLLAGLTTEGDTTVTEPALSRDHSERMLQAFGAKLTIDPVTHSVTVHGPAHLTGQRVVVPGDISSAAFWLVAASILPGSELLVENVGINPTRTGVLEVLAQMGADITPENERLVTGEPVADLRVRASHLQGCTFGGEIIPRLIDEIPILAVAAAFAEGTTRIEDAAELRVKESDRLAAIASELGKMGAKVTEFDDGLEIQGGSPLQGAEVDSLTDHRIAMALAIAALGSGGQTIINRAEAAAISYPEFFGTLGQVAQG.

Positions 36, 37, and 41 each coordinate 3-phosphoshikimate. Lys-36 contributes to the phosphoenolpyruvate binding site. Phosphoenolpyruvate contacts are provided by Gly-109 and Arg-138. Residues Ser-183, Gln-185, Asp-333, and Lys-360 each coordinate 3-phosphoshikimate. Gln-185 serves as a coordination point for phosphoenolpyruvate. Asp-333 functions as the Proton acceptor in the catalytic mechanism. The phosphoenolpyruvate site is built by Arg-364 and Arg-406.

This sequence belongs to the EPSP synthase family. In terms of assembly, monomer.

The protein resides in the cytoplasm. The enzyme catalyses 3-phosphoshikimate + phosphoenolpyruvate = 5-O-(1-carboxyvinyl)-3-phosphoshikimate + phosphate. Its pathway is metabolic intermediate biosynthesis; chorismate biosynthesis; chorismate from D-erythrose 4-phosphate and phosphoenolpyruvate: step 6/7. In terms of biological role, catalyzes the transfer of the enolpyruvyl moiety of phosphoenolpyruvate (PEP) to the 5-hydroxyl of shikimate-3-phosphate (S3P) to produce enolpyruvyl shikimate-3-phosphate and inorganic phosphate. The polypeptide is 3-phosphoshikimate 1-carboxyvinyltransferase (Synechocystis sp. (strain ATCC 27184 / PCC 6803 / Kazusa)).